Here is a 279-residue protein sequence, read N- to C-terminus: NADPH-dependent 7-cyano-7-deazaguanine reductase (279 aa).

Residue 86 to 88 (VES) participates in substrate binding. 88 to 89 (SK) is a binding site for NADPH. C187 functions as the Thioimide intermediate in the catalytic mechanism. D194 serves as the catalytic Proton donor. 226 to 227 (HE) contributes to the substrate binding site. NADPH is bound at residue 255–256 (RG).

Belongs to the GTP cyclohydrolase I family. QueF type 2 subfamily. As to quaternary structure, homodimer.

It is found in the cytoplasm. It catalyses the reaction 7-aminomethyl-7-carbaguanine + 2 NADP(+) = 7-cyano-7-deazaguanine + 2 NADPH + 3 H(+). The protein operates within tRNA modification; tRNA-queuosine biosynthesis. Catalyzes the NADPH-dependent reduction of 7-cyano-7-deazaguanine (preQ0) to 7-aminomethyl-7-deazaguanine (preQ1). The protein is NADPH-dependent 7-cyano-7-deazaguanine reductase of Actinobacillus succinogenes (strain ATCC 55618 / DSM 22257 / CCUG 43843 / 130Z).